We begin with the raw amino-acid sequence, 421 residues long: Probable 26S proteasome regulatory subunit rpn6 (421 aa).

One can recognise a PCI domain in the interval 221–390 (DFKTAYSYFY…GCLIVYDEPQ (170 aa)).

It belongs to the proteasome subunit S9 family. Component of the lid subcomplex of the 19S proteasome regulatory particle complex (also named PA700 complex). The 26S proteasome consists of a 20S proteasome core and two 19S regulatory subunits.

Its function is as follows. Component of the lid subcomplex of the 26S proteasome, a multiprotein complex involved in the ATP-dependent degradation of ubiquitinated proteins. In the complex, rpn6 is required for proteasome assembly. The sequence is that of Probable 26S proteasome regulatory subunit rpn6 (rpn6) from Schizosaccharomyces pombe (strain 972 / ATCC 24843) (Fission yeast).